Here is a 260-residue protein sequence, read N- to C-terminus: Trialysin (260 aa).

The first 19 residues, 1 to 19 (MSKFWLLLLLVAAFQFAHS), serve as a signal peptide directing secretion. A propeptide spans 20 to 55 (YPAAEYELDETTNDEVRQFIGDGYFEDEGDDGDEER) (removed in mature form, probably by the serine protease triapsin).

The protein belongs to the redulysin-like family. As to expression, expressed in salivary glands.

Its subcellular location is the secreted. It is found in the target cell membrane. Its function is as follows. Pore-forming protein that induces lysis of T.cruzi trypomastigotes, bacteria E.coli and human red blood cells. The parasite lysis is much more important than the hemolysis, probably due to difference in membrane composition. Its action on protozoan parasites and bacteria may indicate a role in the control of microorganism growth in the salivary glands. The chain is Trialysin from Triatoma infestans (Assassin bug).